The primary structure comprises 343 residues: Uroporphyrinogen decarboxylase (343 aa).

Substrate-binding positions include 26–30 (RQAGR), Asp75, Tyr150, Ser205, and His319.

Belongs to the uroporphyrinogen decarboxylase family. Homodimer.

It localises to the cytoplasm. The enzyme catalyses uroporphyrinogen III + 4 H(+) = coproporphyrinogen III + 4 CO2. The protein operates within porphyrin-containing compound metabolism; protoporphyrin-IX biosynthesis; coproporphyrinogen-III from 5-aminolevulinate: step 4/4. Its function is as follows. Catalyzes the decarboxylation of four acetate groups of uroporphyrinogen-III to yield coproporphyrinogen-III. The protein is Uroporphyrinogen decarboxylase of Syntrophotalea carbinolica (strain DSM 2380 / NBRC 103641 / GraBd1) (Pelobacter carbinolicus).